Here is a 260-residue protein sequence, read N- to C-terminus: MTDTNVLANSATDNQETTHFGFETVRKDEKVHKVAQVFHSVAAKYDIMNDLMSGGIHRLWKRFTIDCSGARPGQRILDLGGGTGDLTAKFSRIVGEKGHVILADINNSMLNVGRDKLRDSGVVGNVHYVQANAEELPFPDNYFDCITISFCLRNVTDKDKALRSMFRVLKPGGRLLVLEFSKPILEPLSKLYDTYSFHILPKMGQLIANDADSYRYLAESIRMHPDQETLKGMMEEAGFEQTTYYNLTGGIVALHRGYKF.

S-adenosyl-L-methionine is bound by residues Thr-83, Asp-104, 132 to 133 (NA), and Ser-149.

It belongs to the class I-like SAM-binding methyltransferase superfamily. MenG/UbiE family.

It carries out the reaction a 2-demethylmenaquinol + S-adenosyl-L-methionine = a menaquinol + S-adenosyl-L-homocysteine + H(+). The catalysed reaction is a 2-methoxy-6-(all-trans-polyprenyl)benzene-1,4-diol + S-adenosyl-L-methionine = a 5-methoxy-2-methyl-3-(all-trans-polyprenyl)benzene-1,4-diol + S-adenosyl-L-homocysteine + H(+). It participates in quinol/quinone metabolism; menaquinone biosynthesis; menaquinol from 1,4-dihydroxy-2-naphthoate: step 2/2. The protein operates within cofactor biosynthesis; ubiquinone biosynthesis. Functionally, methyltransferase required for the conversion of demethylmenaquinol (DMKH2) to menaquinol (MKH2) and the conversion of 2-polyprenyl-6-methoxy-1,4-benzoquinol (DDMQH2) to 2-polyprenyl-3-methyl-6-methoxy-1,4-benzoquinol (DMQH2). In Vibrio cholerae serotype O1 (strain ATCC 39315 / El Tor Inaba N16961), this protein is Ubiquinone/menaquinone biosynthesis C-methyltransferase UbiE.